We begin with the raw amino-acid sequence, 167 residues long: Pathogenesis-related protein PRMS (167 aa).

A signal peptide spans 1–27 (MEASNKLAVLLLWLVMAAATAVHPSYS). The region spanning 37–155 (PQNSARAAVG…NRGVFIICNY (119 aa)) is the SCP domain. Intrachain disulfides connect cysteine 71-cysteine 143, cysteine 116-cysteine 122, and cysteine 138-cysteine 153.

It belongs to the CRISP family.

Its function is as follows. Probably involved in the defense reaction of plants against pathogens. This Zea mays (Maize) protein is Pathogenesis-related protein PRMS (PRMS).